A 1910-amino-acid chain; its full sequence is MSGEDRGAPYRYAGERPPAYPADGYASYQRGLKSSIPSRSYDTAYPEQGYDRHLRERVHPAYTTGPSYGVPPPPPTDYRRPPPQAAYRYEEDYHHRRAPAQPHLEYAPEHRRQPVHSDAYREADDRRSFEQARSDPYASPSRHAYQDSYRSELPHERRHAPAAYERISVRDDARSAPENRHIDEPAVYRRDEYDAHSREIQPSYRRGAHRSPRLSPQPVVSAHERSSEYATRDYSASAARYAEPVHQPESPPRPSMSIFNMLNDRSANGAVESVHSSPTKSSIAAEHESYPTTAQEPSHASRAAFDPAREQSYSTARDSQAYSRGSEARAGAARVNYTVHPEDEAAISQRRNSSAHQQSSIKSVRHPANAVDEPLIRVKHEEATSASLDAQMSAEPPVSHTLNNGERLSAQDAKVATEDSSLAANGNGKVDSAGGTARPAPAKTQLKLRNNPLPASKSNSSFVAPPPPAKKNRDPDGWESDLSNEENQPFWQTELDDYIFDVRERQRLIEDAFVASMREKHVEVERRLARAYEGRYFAVIRQIRLREQQEASQRDMERRQDHVRQQRDHEIDLELLGTLSDGQQNMGTRKKKGGRGTDDDGLLQADDDDDDDSDDVALADLAARNGSKSNIIKLKRSKGKPAAADPRNKKRRLENGAALSPAPGSEVDSTLADFGGNFDGDDSAFASHQASPTPDDVSFALDVDASGKVPIDARRAQQLEDAHRRIWTTIAKRDVPKVYRTVLQSASSKTMYWRRISSVVQREAKRGAARNNKTVKDVQLRARKVMREVLVFWKRNEKEERELRKKAEREALEKAKKEEEMREAKRQARKLNFLISQTELYSHFVGSKLKTAEAEESEETAGSSKIIDPNAQPSDATVLPINPHSELADAEARLAELDDIDFDDEDESNLRAHAARNAQEAVRLAKEKAQAFDVAAAEERRRNEAAAREREGLDAGPVKQIEEKDLGKAFDSDDMNFLNPTSMGQTEIKQPKMLTCQLKEYQLKGLNWLANLYEQGINGILADEMGLGKTVQSISLMAYLAEVHDIWGPFLVIAPASTLHNWQQEISKFVPTLKALPYWGNVKDRAVLRKFWNRKQISYNRDAPFHVLVTSYQLVVSDEKYFQRVKWQYMILDEAQAIKSSSSIRWKTLLGFNCRNRLLLTGTPVQNSMQELWALLHFIMPSLFDSHDEFSEWFSKDIESHAEQKGTLNEHQLRRLHMILKPFMLRRIKKNVQNELGDKIEIDVFCDLSARQKMLYRGLRANISVAELMDRATSNDEAGLKSLMNLVMQFRKVCNHPELFERADVRAPFALADFARSGSLAREGDLLNLPDSTTSLIELQVPKLLVREGGIFDIPGHNSRKGFDTGYLQNLFNIWRAPHIHESLQEERSTFASLPLIGVSPSEAQKTFHSTGIKRILAAAAEERHWRSLEAFASDDTFAAASVRPLAKMLRPMPTTSGRSPSVLMPLEEVAADYRRHSYLAKDSARAVVAPAVAPPIKLYSNDGPFMQAQERFSRDAQVSVTLFGLSPEGRESVKRVEELQSELPEVPPQGVMRDSSIDQLPYNGMQVPQMNKLIVDSSKLAKLDVLLRELKANGHRVLIYFQMTRMIDLMEEYLIYRQYKYLRLDGASKISDRRDMVTDWQTKPELFIFLLSTRAGGLGINLTAADTVIFYDHDWNPSNDSQAMDRAHRLGQTKQVTVYRLITKGTIDERIVRLARNKKEVQDIVVGTKAYSETGMAKPQEIVSLLLDDDELAESMLRKKQAEEAQTAQEKADLARASHAKRRLNKDRAAAAVESPAPVGSTWSLEDDEDDFFGARPPSKADTDTAETTPQLQSKKRSVGGGGGGSGGAKRGRISEVASPRMTPLSLDDGALMASGEQLASPSKGAAAKRKSKSHRKKTVDELAGVDLD.

3 disordered regions span residues 1–487 (MSGE…NEEN), 548–611 (QQEA…DDDD), and 630–673 (NIIK…TLAD). A compositionally biased stretch (basic and acidic residues) spans 49 to 59 (GYDRHLRERVH). Positions 69–84 (GVPPPPPTDYRRPPPQ) are enriched in pro residues. 3 stretches are compositionally biased toward basic and acidic residues: residues 118 to 133 (DAYR…EQAR), 167 to 199 (ISVR…HSRE), and 222 to 231 (AHERSSEYAT). Polar residues-rich tracts occupy residues 257-266 (SIFNMLNDRS) and 311-320 (QSYSTARDSQ). Residues 321–334 (AYSRGSEARAGAAR) are compositionally biased toward low complexity. Polar residues predominate over residues 349–362 (QRRNSSAHQQSSIK). Composition is skewed to basic and acidic residues over residues 374-383 (PLIRVKHEEA) and 548-572 (QQEA…HEID). The segment covering 599–611 (DDGLLQADDDDDD) has biased composition (acidic residues). Residues 726-851 (IWTTIAKRDV…SHFVGSKLKT (126 aa)) form the DBINO domain. Residues 790-840 (LVFWKRNEKEERELRKKAEREALEKAKKEEEMREAKRQARKLNFLISQTEL) adopt a coiled-coil conformation. Residues 852–878 (AEAEESEETAGSSKIIDPNAQPSDATV) are disordered. In terms of domain architecture, Helicase ATP-binding spans 1010–1182 (ANLYEQGING…WALLHFIMPS (173 aa)). Position 1023–1030 (1023–1030 (DEMGLGKT)) interacts with ATP. Residues 1133 to 1136 (DEAQ) carry the DEAQ box motif. The region spanning 1583–1747 (KLDVLLRELK…AKPQEIVSLL (165 aa)) is the Helicase C-terminal domain. A disordered region spans residues 1760–1910 (KKQAEEAQTA…VDELAGVDLD (151 aa)). The span at 1840–1850 (VGGGGGGSGGA) shows a compositional bias: gly residues. Residues 1888-1899 (AAKRKSKSHRKK) are compositionally biased toward basic residues.

Belongs to the SNF2/RAD54 helicase family. Component of the INO80 chromatin-remodeling complex.

It localises to the nucleus. It catalyses the reaction ATP + H2O = ADP + phosphate + H(+). ATPase component of the INO80 complex which remodels chromatin by shifting nucleosomes and is involved in DNA repair. This chain is Chromatin-remodeling ATPase INO80 (INO80), found in Mycosarcoma maydis (Corn smut fungus).